The following is a 673-amino-acid chain: Auxin response factor 9 (673 aa).

Positions 126 to 228 (FCKTLTASDT…ELRVGVRRLM (103 aa)) form a DNA-binding region, TF-B3. Disordered regions lie at residues 356-386 (ELEP…PSVV) and 514-545 (DSDQ…QSRQ). Positions 516–545 (DQISQPSNGNKSDAPGTSSERSPLESQSRQ) are enriched in polar residues. Positions 547-639 (RSCTKVIMQG…EEAKLLAPKS (93 aa)) constitute a PB1 domain.

The protein belongs to the ARF family. Homodimers and heterodimers. As to expression, expressed in roots, culms, leaves and young panicles.

The protein resides in the nucleus. Its function is as follows. Auxin response factors (ARFs) are transcriptional factors that bind specifically to the DNA sequence 5'-TGTCTC-3' found in the auxin-responsive promoter elements (AuxREs). This is Auxin response factor 9 (ARF9) from Oryza sativa subsp. japonica (Rice).